The primary structure comprises 374 residues: Chaperone protein DnaJ (374 aa).

One can recognise a J domain in the interval 6–70 (DYYDILGVSK…QKRAQYDQFG (65 aa)). The CR-type zinc finger occupies 135 to 217 (GKKTTIKYSR…CGGTGHTSQQ (83 aa)). The Zn(2+) site is built by Cys-148, Cys-151, Cys-165, Cys-168, Cys-191, Cys-194, Cys-205, and Cys-208. CXXCXGXG motif repeat units lie at residues 148-155 (CKTCGGSG), 165-172 (CHKCNGTG), 191-198 (CDVCNGTG), and 205-212 (CPTCGGTG). Disordered regions lie at residues 308-328 (GTNF…GTGD) and 347-374 (EALK…KFMN).

This sequence belongs to the DnaJ family. Homodimer. The cofactor is Zn(2+).

The protein resides in the cytoplasm. Functionally, participates actively in the response to hyperosmotic and heat shock by preventing the aggregation of stress-denatured proteins and by disaggregating proteins, also in an autonomous, DnaK-independent fashion. Unfolded proteins bind initially to DnaJ; upon interaction with the DnaJ-bound protein, DnaK hydrolyzes its bound ATP, resulting in the formation of a stable complex. GrpE releases ADP from DnaK; ATP binding to DnaK triggers the release of the substrate protein, thus completing the reaction cycle. Several rounds of ATP-dependent interactions between DnaJ, DnaK and GrpE are required for fully efficient folding. Also involved, together with DnaK and GrpE, in the DNA replication of plasmids through activation of initiation proteins. This is Chaperone protein DnaJ from Pediococcus pentosaceus (strain ATCC 25745 / CCUG 21536 / LMG 10740 / 183-1w).